The primary structure comprises 234 residues: Accessory gland protein Acp29AB (234 aa).

Residues 1-21 form the signal peptide; sequence MYATNLLYLLALWNLWLVSGG. Residues asparagine 29, asparagine 61, asparagine 127, and asparagine 164 are each glycosylated (N-linked (GlcNAc...) asparagine). A C-type lectin domain is found at 137-234; sequence VTCREMNGHL…SFVCQANQWA (98 aa). 2 cysteine pairs are disulfide-bonded: cysteine 139-cysteine 228 and cysteine 207-cysteine 220.

It is found in the secreted. Its function is as follows. Responsible for physiological and behavioral changes in mated female flies. The protein is Accessory gland protein Acp29AB (Acp29AB) of Drosophila simulans (Fruit fly).